Here is a 279-residue protein sequence, read N- to C-terminus: Virginiamycin B lyase (279 aa).

H215 serves as a coordination point for substrate. E253 lines the Mg(2+) pocket. Catalysis depends on H255, which acts as the Proton acceptor. Residue E270 coordinates Mg(2+).

It belongs to the Vgb family. In terms of assembly, monomer. Mg(2+) is required as a cofactor.

Functionally, inactivates the type B streptogramin antibiotics by linearizing the lactone ring at the ester linkage, generating a free phenylglycine carboxylate and converting the threonyl moiety into 2-amino-butenoic acid. The protein is Virginiamycin B lyase of Nocardia farcinica (strain IFM 10152).